A 223-amino-acid chain; its full sequence is Endonuclease V (223 aa).

Residues D35 and D103 each contribute to the Mg(2+) site.

This sequence belongs to the endonuclease V family. Mg(2+) serves as cofactor.

The protein resides in the cytoplasm. It carries out the reaction Endonucleolytic cleavage at apurinic or apyrimidinic sites to products with a 5'-phosphate.. Functionally, DNA repair enzyme involved in the repair of deaminated bases. Selectively cleaves double-stranded DNA at the second phosphodiester bond 3' to a deoxyinosine leaving behind the intact lesion on the nicked DNA. The chain is Endonuclease V from Shigella dysenteriae serotype 1 (strain Sd197).